Consider the following 351-residue polypeptide: Translation initiation factor eIF2B subunit beta (351 aa).

It belongs to the eIF-2B alpha/beta/delta subunits family. Component of the translation initiation factor 2B (eIF2B) complex which is a heterodecamer of two sets of five different subunits: alpha, beta, gamma, delta and epsilon. Subunits alpha, beta and delta comprise a regulatory subcomplex and subunits epsilon and gamma comprise a catalytic subcomplex. Within the complex, the hexameric regulatory complex resides at the center, with the two heterodimeric catalytic subcomplexes bound on opposite sides.

The protein resides in the cytoplasm. Its subcellular location is the cytosol. Its activity is regulated as follows. Activated by the chemical integrated stress response (ISR) inhibitor ISRIB which stimulates guanine nucleotide exchange factor activity for both phosphorylated and unphosphorylated eIF2. Functionally, acts as a component of the translation initiation factor 2B (eIF2B) complex, which catalyzes the exchange of GDP for GTP on eukaryotic initiation factor 2 (eIF2) gamma subunit. Its guanine nucleotide exchange factor activity is repressed when bound to eIF2 complex phosphorylated on the alpha subunit, thereby limiting the amount of methionyl-initiator methionine tRNA available to the ribosome and consequently global translation is repressed. In Rattus norvegicus (Rat), this protein is Translation initiation factor eIF2B subunit beta (Eif2b2).